The chain runs to 188 residues: dCTP deaminase (188 aa).

DCTP is bound by residues 111–116 (KSTYAR), 135–137 (TLE), Gln-156, Tyr-170, and Gln-180. The Proton donor/acceptor role is filled by Glu-137.

Belongs to the dCTP deaminase family. In terms of assembly, homotrimer.

It carries out the reaction dCTP + H2O + H(+) = dUTP + NH4(+). Its pathway is pyrimidine metabolism; dUMP biosynthesis; dUMP from dCTP (dUTP route): step 1/2. Its function is as follows. Catalyzes the deamination of dCTP to dUTP. In Neisseria meningitidis serogroup B (strain ATCC BAA-335 / MC58), this protein is dCTP deaminase.